We begin with the raw amino-acid sequence, 663 residues long: GPI mannosyltransferase 3 (663 aa).

The span at 1 to 11 (MPMSARSRRSN) shows a compositional bias: basic residues. The segment at 1-44 (MPMSARSRRSNPRLPPSPSSSSSSDAVRASPHSSPPSRLRPPSA) is disordered. Positions 19–42 (SSSSSSDAVRASPHSSPPSRLRPP) are enriched in low complexity. Transmembrane regions (helical) follow at residues 47 to 67 (DVSS…ALTV), 110 to 130 (PLIF…LGLT), 137 to 157 (LLIA…DFYT), 226 to 246 (VLAV…FPPL), 269 to 289 (YASQ…LVGL), 304 to 324 (GSIL…LSVI), 335 to 355 (LLPA…IPAL), and 367 to 387 (LTLI…TLFH). A disordered region spans residues 492–512 (HIPRRPSYATPPSSQRQPTQL). Positions 501-511 (TPPSSQRQPTQ) are enriched in polar residues.

The protein belongs to the glycosyltransferase 22 family. PIGB subfamily.

The protein localises to the endoplasmic reticulum membrane. The protein operates within glycolipid biosynthesis; glycosylphosphatidylinositol-anchor biosynthesis. Its function is as follows. Mannosyltransferase involved in glycosylphosphatidylinositol-anchor biosynthesis. Transfers the third mannose to Man2-GlcN-acyl-PI during GPI precursor assembly. The protein is GPI mannosyltransferase 3 (gpi10) of Emericella nidulans (strain FGSC A4 / ATCC 38163 / CBS 112.46 / NRRL 194 / M139) (Aspergillus nidulans).